The chain runs to 182 residues: Crossover junction endodeoxyribonuclease RuvC (182 aa).

Active-site residues include Asp7, Glu69, and Asp141. Positions 7, 69, and 141 each coordinate Mg(2+).

Belongs to the RuvC family. As to quaternary structure, homodimer which binds Holliday junction (HJ) DNA. The HJ becomes 2-fold symmetrical on binding to RuvC with unstacked arms; it has a different conformation from HJ DNA in complex with RuvA. In the full resolvosome a probable DNA-RuvA(4)-RuvB(12)-RuvC(2) complex forms which resolves the HJ. Mg(2+) serves as cofactor.

The protein localises to the cytoplasm. It carries out the reaction Endonucleolytic cleavage at a junction such as a reciprocal single-stranded crossover between two homologous DNA duplexes (Holliday junction).. Functionally, the RuvA-RuvB-RuvC complex processes Holliday junction (HJ) DNA during genetic recombination and DNA repair. Endonuclease that resolves HJ intermediates. Cleaves cruciform DNA by making single-stranded nicks across the HJ at symmetrical positions within the homologous arms, yielding a 5'-phosphate and a 3'-hydroxyl group; requires a central core of homology in the junction. The consensus cleavage sequence is 5'-(A/T)TT(C/G)-3'. Cleavage occurs on the 3'-side of the TT dinucleotide at the point of strand exchange. HJ branch migration catalyzed by RuvA-RuvB allows RuvC to scan DNA until it finds its consensus sequence, where it cleaves and resolves the cruciform DNA. This chain is Crossover junction endodeoxyribonuclease RuvC, found in Albidiferax ferrireducens (strain ATCC BAA-621 / DSM 15236 / T118) (Rhodoferax ferrireducens).